The primary structure comprises 335 residues: D-alanine--D-alanine ligase (335 aa).

The region spanning 124-329 (KMWFSALGVP…FTHYLYSNIK (206 aa)) is the ATP-grasp domain. 154–209 (ALENWGSIFIKAASQGSSVGCYRVDSQDELVSSLEQAFSFSPYVIVEKTINARELE) is a binding site for ATP. Positions 283, 296, and 298 each coordinate Mg(2+).

This sequence belongs to the D-alanine--D-alanine ligase family. Mg(2+) serves as cofactor. Requires Mn(2+) as cofactor.

Its subcellular location is the cytoplasm. It carries out the reaction 2 D-alanine + ATP = D-alanyl-D-alanine + ADP + phosphate + H(+). It participates in cell wall biogenesis; peptidoglycan biosynthesis. Its function is as follows. Cell wall formation. This Shewanella woodyi (strain ATCC 51908 / MS32) protein is D-alanine--D-alanine ligase.